A 63-amino-acid polypeptide reads, in one-letter code: Bowman-Birk type proteinase inhibitor (63 aa).

7 cysteine pairs are disulfide-bonded: Cys7–Cys60, Cys8–Cys23, Cys11–Cys56, Cys13–Cys21, Cys30–Cys37, Cys34–Cys49, and Cys39–Cys47.

Monomer.

In terms of biological role, inhibits trypsin stoichiometrically at the molar ratio of 1:2, with a dissociation constant of 4.2 nM. Does not inhibit chymotrypsin. This is Bowman-Birk type proteinase inhibitor from Lupinus albus (White lupine).